A 213-amino-acid chain; its full sequence is CDP-diacylglycerol--inositol 3-phosphatidyltransferase (213 aa).

Residues 1–5 lie on the Cytoplasmic side of the membrane; the sequence is MPDEN. Residues 6–26 traverse the membrane as a helical segment; that stretch reads IFLFVPNLIGYARIVFAIISF. Tyr27 is a topological domain (lumenal). The helical transmembrane segment at 28 to 48 threads the bilayer; the sequence is FMPCCPLTASSFYLLSGLLDA. Mg(2+)-binding residues include Asp47 and Asp50. The Cytoplasmic portion of the chain corresponds to 49-73; it reads FDGHAARALNQGTRFGAMLDMLTDR. Positions 51, 55, and 61 each coordinate a CDP-1,2-diacyl-sn-glycerol. Mg(2+) is bound by residues Asp68 and Asp72. Asp72 serves as the catalytic Proton acceptor. A helical transmembrane segment spans residues 74-94; sequence CSTMCLLVNLALLYPGATLFF. A topological domain (lumenal) is located at residue Gln95. Residues 96–116 form a helical membrane-spanning segment; the sequence is ISMSLDVASHWLHLHSSVVRG. At 117–139 the chain is on the cytoplasmic side; that stretch reads SESHKMIDLSGNPVLRIYYTSRP. The chain crosses the membrane as a helical span at residues 140–160; that stretch reads ALFTLCAGNELFYCLLYLFHF. Over 161-174 the chain is Lumenal; that stretch reads SEGPLVGSVGLFRM. Residues 175 to 195 traverse the membrane as a helical segment; sequence GLWVTAPIALLKSLISVIHLI. The Cytoplasmic portion of the chain corresponds to 196–213; sequence TAARNMAALDAADRAKKK.

This sequence belongs to the CDP-alcohol phosphatidyltransferase class-I family. Requires Mn(2+) as cofactor. The cofactor is Mg(2+). As to expression, detected in placenta (at protein level). Widely expressed. Higher expression in adult liver and skeletal muscle, slightly lower levels seen in pancreas, kidney, lung, placenta, brain, heart, leukocyte, colon, small intestine, ovary, testis, prostate, thymus and spleen. In fetus, expressed in kidney, liver, lung and brain.

It is found in the endoplasmic reticulum membrane. Its subcellular location is the cell membrane. The catalysed reaction is a CDP-1,2-diacyl-sn-glycerol + myo-inositol = a 1,2-diacyl-sn-glycero-3-phospho-(1D-myo-inositol) + CMP + H(+). With respect to regulation, inhibited by PtdIns (product inhibition), phosphatidylinositol phosphate, and nucleoside di- and tri-phosphates. Functionally, catalyzes the biosynthesis of phosphatidylinositol (PtdIns) as well as PtdIns:inositol exchange reaction. May thus act to reduce an excessive cellular PtdIns content. The exchange activity is due to the reverse reaction of PtdIns synthase and is dependent on CMP, which is tightly bound to the enzyme. The chain is CDP-diacylglycerol--inositol 3-phosphatidyltransferase from Homo sapiens (Human).